The primary structure comprises 471 residues: Putative metabolite transport protein YncC (471 aa).

The next 12 membrane-spanning stretches (helical) occupy residues L13–N33, V50–C70, F88–V108, F111–M131, L146–M166, Y175–P195, L256–M276, I295–V315, I323–I343, L358–I378, I393–L413, and V416–V436.

It belongs to the major facilitator superfamily. Sugar transporter (TC 2.A.1.1) family.

The protein localises to the cell membrane. The protein is Putative metabolite transport protein YncC (yncC) of Bacillus subtilis (strain 168).